The chain runs to 1004 residues: Ephrin type-B receptor 2 (1004 aa).

An N-terminal signal peptide occupies residues 1 to 19 (MGPLWFCCLPLALLPLLAA). Residues 20–544 (VEETLMDSTT…QTSVQEKLPL (525 aa)) lie on the Extracellular side of the membrane. Residues 21–203 (EETLMDSTTA…FYRKCPRVIQ (183 aa)) enclose the Eph LBD domain. 2 disulfide bridges follow: Cys-63/Cys-185 and Cys-98/Cys-108. Asn-266, Asn-337, Asn-429, Asn-478, and Asn-483 each carry an N-linked (GlcNAc...) asparagine glycan. 2 consecutive Fibronectin type-III domains span residues 325–435 (IPSA…TNQA) and 436–531 (APSA…TMTE). The chain crosses the membrane as a helical span at residues 545–565 (IIGSSAAGLVFLIAVVVIIIV). The Cytoplasmic segment spans residues 566–1004 (CNRRRGFERA…QMNQIQSVEV (439 aa)). The Protein kinase domain maps to 639 to 902 (VKIEQVIGAG…QIVNTLDKMI (264 aa)). ATP-binding positions include 645–653 (IGAGEFGEV) and Lys-671. Catalysis depends on Asp-764, which acts as the Proton acceptor. The SAM domain maps to 931–995 (TSFNTVDEWL…LNSIQVMRAQ (65 aa)). Residues 1002-1004 (VEV) carry the PDZ-binding motif.

The protein belongs to the protein kinase superfamily. Tyr protein kinase family. Ephrin receptor subfamily. Heterotetramer upon binding of the ligand. The heterotetramer is composed of an ephrin dimer and a receptor dimer. Oligomerization is probably required to induce biological responses. In terms of processing, ligand binding induces cleavage by matrix metalloproteinases (MMPs) such as MMP7/MMP9, producing an EphB2/N-terminal fragment (NTF) and a C-terminal long fragment (EphB2-LF). EphB2-LF is further cleaved by MMPs, producing EphB2/CTF1 which is further cleaved by the PS1/gamma-secretase producing EphB2/CTF2. In terms of tissue distribution, wide tissue distribution throughout development and sustained expression in adult brain. The longer form (CEK5+) is specifically expressed in the central nervous system.

The protein localises to the cell membrane. Its subcellular location is the cell projection. It is found in the axon. It localises to the dendrite. The enzyme catalyses L-tyrosyl-[protein] + ATP = O-phospho-L-tyrosyl-[protein] + ADP + H(+). Functionally, receptor tyrosine kinase which binds promiscuously transmembrane ephrin-B family ligands residing on adjacent cells, leading to contact-dependent bidirectional signaling into neighboring cells. The signaling pathway downstream of the receptor is referred to as forward signaling while the signaling pathway downstream of the ephrin ligand is referred to as reverse signaling. Functions in axon guidance during development. In addition to axon guidance, also regulates dendritic spines development and maturation and stimulates the formation of excitatory synapses. This chain is Ephrin type-B receptor 2 (EPHB2), found in Gallus gallus (Chicken).